Reading from the N-terminus, the 168-residue chain is Peptide deformylase (168 aa).

Residues C92 and H134 each coordinate Fe cation. Residue E135 is part of the active site. H138 is a Fe cation binding site.

This sequence belongs to the polypeptide deformylase family. Fe(2+) serves as cofactor.

The catalysed reaction is N-terminal N-formyl-L-methionyl-[peptide] + H2O = N-terminal L-methionyl-[peptide] + formate. Its function is as follows. Removes the formyl group from the N-terminal Met of newly synthesized proteins. Requires at least a dipeptide for an efficient rate of reaction. N-terminal L-methionine is a prerequisite for activity but the enzyme has broad specificity at other positions. This is Peptide deformylase from Pseudomonas aeruginosa (strain ATCC 15692 / DSM 22644 / CIP 104116 / JCM 14847 / LMG 12228 / 1C / PRS 101 / PAO1).